The sequence spans 405 residues: uncharacterized protein (405 aa).

The next 12 membrane-spanning stretches (helical) occupy residues 3 to 23 (IIAKIPAWMLLCLFILSPTTE), 42 to 62 (GITQTTSTLYFLGFALGILTL), 73 to 93 (PIALLGLFIYVISSIISIFAV), 95 to 115 (IEMLMIARFVQAFGVSVGSVI), 135 to 155 (SLSPWLLFIPSLGSSIGGYII), 162 to 182 (YVFVFFSLTGTILLALYYKVL), 209 to 229 (ILWLYAFIIGAFNGIYYGFFI), 248 to 268 (KLAFLLSFAAIFGGFLGGYLI), 280 to 300 (GLGFIFSLCGCILFAVNAFIL), 309 to 329 (LAIAMIFVPMMIHMVGHNLLI), 346 to 366 (TAGSIFGAIYYVVIAAVTYLV), and 377 to 397 (FALLCFVLSISSAISFYCIWV).

It belongs to the major facilitator superfamily. Bcr/CmlA family.

It is found in the cell inner membrane. This is an uncharacterized protein from Rickettsia felis (strain ATCC VR-1525 / URRWXCal2) (Rickettsia azadi).